A 71-amino-acid polypeptide reads, in one-letter code: U3-scytotoxin-Sth1h (71 aa).

The N-terminal stretch at 1-33 (MSQNSITSYKMGFAKHFFLFAVLLCATAMYSVA) is a signal peptide. Positions 34-39 (EPAQER) are excised as a propeptide. Cystine bridges form between C46/C60, C53/C64, and C59/C69.

As to expression, expressed by the venom gland.

Its subcellular location is the secreted. Functionally, probable insect neurotoxin with ion channel impairing activity. Does not show activity on 45 human receptors from 9 families (5-hydroxytryptamine, adrenergic, dopamine, muscarinic, histamine, neurotransmitter, opioid, sigma, and gaba(A) receptors). In vivo, when mixed with U3-SYTX-Sth1a does not cause paralytic or lethal activity when injected into crickets. It is noteworthy that crickets are evolutionarily distant from prey species. This Scytodes thoracica (Spitting spider) protein is U3-scytotoxin-Sth1h.